We begin with the raw amino-acid sequence, 1279 residues long: MVTINDLHYSDPIDEDNIINMRIPLYDLEVDDQFINHNVPDLKAFQVFPNVWVVPERYTFYSTMKNLDAPANPSRSSYYDPTYLQSDAEKEVFLQQMILLFKRINSTQEGQQFLNLLSRSIPVPYESNGDVAMGTTQVIKQMDDKGNVLKHRRAHIIIYGPGPDLMAKGSKALTKSRETGRGCMAEIYFSPMYHKTYSTKLTNKNSLVDKSVQEFVPDPAVTLIHELCHGLHALYGIDLGNVGSWEFNSNPNSLFSSWFSSKEAVNFEEVMTFGGEDVKVIKSEIDKKIPGILNLIKTTVEPIINKITDPHDEMLQCLQSKYPSLKGTLGQFFFDDTQLEKDIRDLWMVMNETMFAENLKALTRARYLVPKVENIVQVDILSPNVYTIDKGFNHLSKGFKGQSVSQSYFRKISALARGAVVRACPNPHFSSQRGLSSCIEILEDDLFIMSSKDSFTDTDFSEPSVGPVSYKAKKGADTILDSTLSNYDFSKEINFTSTVPIITVEDPLETDEDVPVISEDRTVYVDDYTTFHFLEAQKIGKEVVPTQTKVVFTTNMEEALFDSKKVYTVFENTASRINEAGTGIANGMMFYQWLKGIVQDFTEEATQKDTFDKISDVTMIVPYLGNILNIGNDIRKGDFMGAVELGGVTILLEAIPELTLPVLIGLTIIEDELEKEQVSQTVYNVLDKRDEKWEEVYGFVKQQWWWMVHTQFETRILHAYQALNHQVEAIKANMTYQLANYRGNQEDKELLEKAIDDTLQSLYYAVDQAMHNIKRFLIQSSKSYLLNQMLPKTKEQLLAFDQQTLRNVNDFINKNQGVLGESLAKDLKKKVEKRLTSLPVFNLEDLPISEFEDLIHSHEIDIQDSEVLNIGVNNGKIQDLSGENTPLTLGENLHIVNGRDNQAVRLNNQLDSKLEIQSRPNIHFTAFEDFSISIWIRCSMLRNNRNRGQKYTIIQQFNKYGWQLAIQDSVFVWTLHDTFNNQIQLTSGSALTNKNYLLQNFWLHITVTNKRSEKSRLYINGVLQDQKDISVLGNCHPKEPILFSIQDNSDPNYFVRFEQFNVYRKALTDSEVNRLYWKYFEGSYLRDVWGERLTYNRDYYMQLSTLPGRGIKREYRTWSGFDYIILSELGTQKIPTHEVTYPKLYQGQKITIHSDGKNLEPHVKSNKNIRLKIDDFYIGVVNPFKLPEWRPESGAYVVTTYNHAEDLCLYFRTRSSSQSLYYGQLIMNDGRNKSLLNYTLKGSTYWIWSSAWYYENYNTSSKTAGNWYFIPVDEGWKED.

H225 contributes to the Zn(2+) binding site. Residue E226 is part of the active site. Zn(2+)-binding residues include H229 and E269. A disulfide bridge links C424 with C438. The interval 435-843 (LSSCIEILED…RLTSLPVFNL (409 aa)) is translocation domain (TD). The belt; not required for channel formation stretch occupies residues 476–525 (ADTILDSTLSNYDFSKEINFTSTVPIITVEDPLETDEDVPVISEDRTVYV). An N-terminus of receptor binding domain (N-RBD) region spans residues 860–1080 (IDIQDSEVLN…EVNRLYWKYF (221 aa)). A C-terminus of receptor binding domain (C-RBD) region spans residues 1081–1279 (EGSYLRDVWG…IPVDEGWKED (199 aa)). Positions 1250–1253 (SAWY) match the Host ganglioside-binding motif motif.

This sequence belongs to the peptidase M27 family. In terms of assembly, might be a disulfide-linked heterodimer of a light chain (LC) and heavy chain (HC). Requires Zn(2+) as cofactor.

It localises to the secreted. The protein localises to the host cytoplasm. The protein resides in the host cytosol. It is found in the host cell membrane. Its subcellular location is the host cytoplasmic vesicle membrane. The catalysed reaction is Limited hydrolysis of proteins of the neuroexocytosis apparatus, synaptobrevins, SNAP25 or syntaxin. No detected action on small molecule substrates.. Strongly resembles a botulinum-type toxin, with the appropriate domains and residues to have proteolytic function, although its C-terminus (which binds to a eukaryotic host cell) is different enough from clostrial botulinum toxins that it might bind another cell target. Might be a precursor of a toxin that binds to an unknown eukaryotic cell receptor(s), and be taken up into the host cell via the endocytic pathway. When the pH of the putative toxin-containing endosome drops a structural rearrangement occurs so that the N-terminus of the heavy chain forms pores that allows the light chain to translocate into the cytosol. Once in the cytosol the disulfide bond linking the 2 subunits is reduced and light chain cleaves its target protein. The protein is Botulinum-like toxin eBoNT/J of Enterococcus sp. (strain 3G1_DIV0629).